We begin with the raw amino-acid sequence, 372 residues long: Ligninase A (372 aa).

Residues 1–21 (MAFKQLVAAISLALSLTTANA) form the signal peptide. Positions 22 to 28 (AVVKEKR) are excised as a propeptide. Disulfide bonds link Cys31-Cys43, Cys42-Cys313, Cys62-Cys148, and Cys277-Cys345. The Proton acceptor role is filled by His75. Residues Asp76, Gly94, Asp96, and Ser98 each contribute to the Ca(2+) site. Heme b is bound at residue His204. Ca(2+)-binding residues include Ser205, Asp222, Thr224, Ile227, and Asp229. Asn285 carries N-linked (GlcNAc...) asparagine glycosylation.

This sequence belongs to the peroxidase family. Ligninase subfamily. Heme b serves as cofactor. The cofactor is Ca(2+).

The catalysed reaction is 1-(3,4-dimethoxyphenyl)-2-(2-methoxyphenoxy)propane-1,3-diol + H2O2 = 3,4-dimethoxybenzaldehyde + guaiacol + glycolaldehyde + H2O. It carries out the reaction 2 (3,4-dimethoxyphenyl)methanol + H2O2 = 2 (3,4-dimethoxyphenyl)methanol radical + 2 H2O. It participates in secondary metabolite metabolism; lignin degradation. Functionally, depolymerization of lignin. Catalyzes the C(alpha)-C(beta) cleavage of the propyl side chains of lignin. This Phanerodontia chrysosporium (White-rot fungus) protein is Ligninase A (LIPA).